We begin with the raw amino-acid sequence, 421 residues long: Alpha-1-antiproteinase 2 (421 aa).

An N-terminal signal peptide occupies residues 1–24 (MPSSVPWCLLLLAGLCCLVPSSLA). N73, N110, and N274 each carry an N-linked (GlcNAc...) asparagine glycan. Residues 376–395 (GTTMWEIMPISLPPDLKFNR) are RCL.

The protein belongs to the serpin family. N-glycosylated with carbohydrates having biantennary side chains. Plasma.

It is found in the secreted. Inhibitor of serine proteases. The sequence is that of Alpha-1-antiproteinase 2 from Equus caballus (Horse).